The following is a 269-amino-acid chain: 4-hydroxy-tetrahydrodipicolinate reductase (269 aa).

Residues 8-13 (GVAGRM), 98-100 (GTT), and 122-125 (APNM) each bind NAD(+). Catalysis depends on H156, which acts as the Proton donor/acceptor. Residue H157 participates in (S)-2,3,4,5-tetrahydrodipicolinate binding. K160 (proton donor) is an active-site residue. 166–167 (GT) contributes to the (S)-2,3,4,5-tetrahydrodipicolinate binding site.

Belongs to the DapB family.

The protein resides in the cytoplasm. It catalyses the reaction (S)-2,3,4,5-tetrahydrodipicolinate + NAD(+) + H2O = (2S,4S)-4-hydroxy-2,3,4,5-tetrahydrodipicolinate + NADH + H(+). The catalysed reaction is (S)-2,3,4,5-tetrahydrodipicolinate + NADP(+) + H2O = (2S,4S)-4-hydroxy-2,3,4,5-tetrahydrodipicolinate + NADPH + H(+). Its pathway is amino-acid biosynthesis; L-lysine biosynthesis via DAP pathway; (S)-tetrahydrodipicolinate from L-aspartate: step 4/4. Functionally, catalyzes the conversion of 4-hydroxy-tetrahydrodipicolinate (HTPA) to tetrahydrodipicolinate. In Chromohalobacter salexigens (strain ATCC BAA-138 / DSM 3043 / CIP 106854 / NCIMB 13768 / 1H11), this protein is 4-hydroxy-tetrahydrodipicolinate reductase.